The following is a 428-amino-acid chain: Anaerobic glycerol-3-phosphate dehydrogenase subunit B (428 aa).

This sequence belongs to the anaerobic G-3-P dehydrogenase subunit B family. As to quaternary structure, composed of a catalytic GlpA/B dimer and of membrane bound GlpC. FMN is required as a cofactor.

The enzyme catalyses a quinone + sn-glycerol 3-phosphate = dihydroxyacetone phosphate + a quinol. It participates in polyol metabolism; glycerol degradation via glycerol kinase pathway; glycerone phosphate from sn-glycerol 3-phosphate (anaerobic route): step 1/1. Its function is as follows. Conversion of glycerol 3-phosphate to dihydroxyacetone. Uses fumarate or nitrate as electron acceptor. The polypeptide is Anaerobic glycerol-3-phosphate dehydrogenase subunit B (Actinobacillus pleuropneumoniae serotype 5b (strain L20)).